We begin with the raw amino-acid sequence, 143 residues long: Nucleoside diphosphate kinase (143 aa).

6 residues coordinate ATP: K11, F59, R87, T93, R104, and N114. H117 functions as the Pros-phosphohistidine intermediate in the catalytic mechanism.

This sequence belongs to the NDK family. As to quaternary structure, homotetramer. It depends on Mg(2+) as a cofactor.

It localises to the cytoplasm. It catalyses the reaction a 2'-deoxyribonucleoside 5'-diphosphate + ATP = a 2'-deoxyribonucleoside 5'-triphosphate + ADP. It carries out the reaction a ribonucleoside 5'-diphosphate + ATP = a ribonucleoside 5'-triphosphate + ADP. Its function is as follows. Major role in the synthesis of nucleoside triphosphates other than ATP. The ATP gamma phosphate is transferred to the NDP beta phosphate via a ping-pong mechanism, using a phosphorylated active-site intermediate. This chain is Nucleoside diphosphate kinase, found in Shewanella amazonensis (strain ATCC BAA-1098 / SB2B).